Consider the following 488-residue polypeptide: MEVTLSQGEYRLLKLMAERGFREGTLEEASKILGVDKSSLASLSNLLAEKGVVEVEERVEEHYVLTERGRDALERGLPEEKLVLFLAGRGGEASVEEVRRALGEEAGIALGQAARKGLVVIAGGVVRLAVDQAEALKTITPLKKLLENVASGSKPTVGDELLREALSRGLIRREARRSIVLRLKVNPAEALARARVEAAVLTRDMLKSGEWRRLRFKPYNVKAEPPRVLPARRHFLAEFIERLRDILRELGFREVRGPLVELELFNFDVLFQAQDHPAREIHDSLWIKSPRRGDLSGYSDLVERVASVHERGWKYRWSPEVASRYILRSQTTAVSARILATRPNPPARFFTVGKVFRSDAVGPTRLPEFHQLDGIEGDEGYTFRDLLGRLDEIASMLGLKLKFKPAYFPFTEPSVEGYVKLPNGRWLELFGAGMFRPEVLEAVGVDYPVGAWGFGIERLAMAFYGVSDIRKLYTRNVDEVREMRVRWL.

L-phenylalanine contacts are provided by residues Thr332, Gln371–Asp373, and Phe410. Residue Glu412 participates in Mg(2+) binding. Phe435 lines the L-phenylalanine pocket.

This sequence belongs to the class-II aminoacyl-tRNA synthetase family. Phe-tRNA synthetase alpha subunit type 2 subfamily. As to quaternary structure, tetramer of two alpha and two beta subunits. It depends on Mg(2+) as a cofactor.

It is found in the cytoplasm. The enzyme catalyses tRNA(Phe) + L-phenylalanine + ATP = L-phenylalanyl-tRNA(Phe) + AMP + diphosphate + H(+). This chain is Phenylalanine--tRNA ligase alpha subunit, found in Aeropyrum pernix (strain ATCC 700893 / DSM 11879 / JCM 9820 / NBRC 100138 / K1).